Reading from the N-terminus, the 239-residue chain is Transcriptional regulatory protein BtsR (239 aa).

The Response regulatory domain maps to 3 to 116 (KVLIVDDEPL…RLEKTLARLR (114 aa)). A 4-aspartylphosphate modification is found at Asp54. The 103-residue stretch at 137–239 (IPCTGHSRIY…LKSLKEAIGL (103 aa)) folds into the HTH LytTR-type domain.

Phosphorylated by BtsS.

Its function is as follows. Member of the two-component regulatory system BtsS/BtsR. BtsR regulates expression of btsT by binding to its promoter region. In Shigella flexneri, this protein is Transcriptional regulatory protein BtsR.